The chain runs to 506 residues: Dipeptide and tripeptide permease A (506 aa).

At methionine 1 to arginine 36 the chain is on the cytoplasmic side. A helical transmembrane segment spans residues phenylalanine 37 to serine 57. Over glutamate 58 to serine 61 the chain is Periplasmic. A helical membrane pass occupies residues isoleucine 62–leucine 82. Topologically, residues glycine 83–arginine 91 are cytoplasmic. Helical transmembrane passes span valine 92–histidine 112 and serine 113–alanine 133. Topologically, residues asparagine 134–threonine 155 are cytoplasmic. Residues methionine 156–alanine 176 form a helical membrane-spanning segment. At alanine 177–glycine 180 the chain is on the periplasmic side. The chain crosses the membrane as a helical span at residues tryptophan 181–phenylalanine 201. Over cysteine 202–lysine 222 the chain is Cytoplasmic. The helical transmembrane segment at leucine 223–asparagine 243 threads the bilayer. At glutamine 244 to arginine 248 the chain is on the periplasmic side. Residues tryptophan 249–valine 269 form a helical membrane-spanning segment. At serine 270–lysine 276 the chain is on the cytoplasmic side. A helical transmembrane segment spans residues methionine 277–methionine 297. The Periplasmic portion of the chain corresponds to proline 298 to glutamine 322. The helical transmembrane segment at tyrosine 323–asparagine 343 threads the bilayer. Over lysine 344–lysine 354 the chain is Cytoplasmic. The chain crosses the membrane as a helical span at residues phenylalanine 355–methionine 375. Over alanine 376–asparagine 385 the chain is Periplasmic. The helical transmembrane segment at tryptophan 386–leucine 406 threads the bilayer. Over alanine 407–arginine 416 the chain is Cytoplasmic. Residues leucine 417–glycine 437 traverse the membrane as a helical segment. Topologically, residues tyrosine 438–asparagine 461 are periplasmic. The chain crosses the membrane as a helical span at residues valine 462–proline 482. Over lysine 483–alanine 506 the chain is Cytoplasmic.

The protein belongs to the major facilitator superfamily. Proton-dependent oligopeptide transporter (POT/PTR) (TC 2.A.17) family. DtpA subfamily.

It is found in the cell inner membrane. Its function is as follows. Proton-dependent permease that transports di- and tripeptides. The chain is Dipeptide and tripeptide permease A from Pectobacterium carotovorum subsp. carotovorum (strain PC1).